The primary structure comprises 347 residues: tRNA(Ile)-lysidine synthase (347 aa).

Residue S27–S32 participates in ATP binding. The disordered stretch occupies residues A243 to H263.

This sequence belongs to the tRNA(Ile)-lysidine synthase family.

The protein localises to the cytoplasm. It carries out the reaction cytidine(34) in tRNA(Ile2) + L-lysine + ATP = lysidine(34) in tRNA(Ile2) + AMP + diphosphate + H(+). Functionally, ligates lysine onto the cytidine present at position 34 of the AUA codon-specific tRNA(Ile) that contains the anticodon CAU, in an ATP-dependent manner. Cytidine is converted to lysidine, thus changing the amino acid specificity of the tRNA from methionine to isoleucine. The sequence is that of tRNA(Ile)-lysidine synthase from Nitratidesulfovibrio vulgaris (strain ATCC 29579 / DSM 644 / CCUG 34227 / NCIMB 8303 / VKM B-1760 / Hildenborough) (Desulfovibrio vulgaris).